Consider the following 887-residue polypeptide: Phosphatidylinositol 3-kinase catalytic subunit type 3 (887 aa).

The region spanning 35-184 is the C2 PI3K-type domain; it reads YKAVLEDPML…LAKLTKAHRQ (150 aa). A disordered region spans residues 149-170; it reads VEADGSEPTRTPGRTSSTLSED. A compositionally biased stretch (polar residues) spans 156-170; that stretch reads PTRTPGRTSSTLSED. Thr163 is modified (phosphothreonine; by AMPK). Position 165 is a phosphoserine; by AMPK (Ser165). Phosphoserine occurs at positions 244, 261, and 282. The PIK helical domain occupies 283-520; that stretch reads DHDLKPNATT…PKTHEMYLNV (238 aa). The tract at residues 415–466 is disordered; it reads LEPTKKDSQTSASESLSNSGVSSGDIDSSQIITNPLPPVASPPPASKAKEVS. Low complexity predominate over residues 425–437; the sequence is SASESLSNSGVSS. Pro residues predominate over residues 449-459; that stretch reads PLPPVASPPPA. The PI3K/PI4K catalytic domain maps to 605–871; it reads IPETATLFKS…LIDESVHALF (267 aa). Positions 611-617 are G-loop; that stretch reads LFKSALM. The tract at residues 740 to 748 is catalytic loop; the sequence is GVGDRHLDN. An activation loop region spans residues 759-780; that stretch reads HIDFGYILGRDPKPLPPPMKLN.

This sequence belongs to the PI3/PI4-kinase family. Component of the PI3K (PI3KC3/PI3K-III/class III phosphatidylinositol 3-kinase) complex the core of which is composed of the catalytic subunit PIK3C3, the regulatory subunit PIK3R4 and BECN1 associating with additional regulatory/auxiliary subunits to form alternative complex forms. Alternative complex forms containing a fourth regulatory subunit in a mutually exclusive manner are: the PI3K complex I (PI3KC3-C1) containing ATG14, and the PI3K complex II (PI3KC3-C2) containing UVRAG. PI3KC3-C1 displays a V-shaped architecture with PIK3R4 serving as a bridge between PIK3C3 and the ATG14:BECN1 subcomplex. Both, PI3KC3-C1 and PI3KC3-C2, can associate with further regulatory subunits such as RUBCN, SH3GLB1/Bif-1 and AMBRA1. PI3KC3-C1 probably associates with PIK3CB. Interacts with RAB7A in the presence of PIK3R4. Interacts with AMBRA1. Interacts with BECN1P1/BECN2. Interacts with SLAMF1. May be a component of a complex composed of RAB5A (in GDP-bound form), DYN2 and PIK3C3. Interacts with NCKAP1L. Interacts with ATG14; this interaction is increased in the absence of TMEM39A. Interacts with STEEP1; the interaction is STING1-dependent and required for trafficking of STING1 from the endoplasmic reticulum. Interacts with YWHAG. Interacts with ARMC3. Mn(2+) serves as cofactor. In terms of processing, ubiquitinated via 'Lys-29'- and 'Lys-48'-linked ubiquitination by UBE3C, promoting its degradation. Deubiquitination by ZRANB1/TRABID promotes its stabilization, leading to autophagosome maturation.

The protein localises to the midbody. It localises to the late endosome. The protein resides in the cytoplasmic vesicle. Its subcellular location is the autophagosome. It catalyses the reaction a 1,2-diacyl-sn-glycero-3-phospho-(1D-myo-inositol) + ATP = a 1,2-diacyl-sn-glycero-3-phospho-(1D-myo-inositol-3-phosphate) + ADP + H(+). Catalytic subunit of the PI3K complex that mediates formation of phosphatidylinositol 3-phosphate; different complex forms are believed to play a role in multiple membrane trafficking pathways: PI3KC3-C1 is involved in initiation of autophagosomes and PI3KC3-C2 in maturation of autophagosomes and endocytosis. As part of PI3KC3-C1, promotes endoplasmic reticulum membrane curvature formation prior to vesicle budding. Involved in regulation of degradative endocytic trafficking and required for the abscission step in cytokinesis, probably in the context of PI3KC3-C2. Involved in the transport of lysosomal enzyme precursors to lysosomes. Required for transport from early to late endosomes. The protein is Phosphatidylinositol 3-kinase catalytic subunit type 3 of Mus musculus (Mouse).